The primary structure comprises 416 residues: Enterobactin exporter EntS (416 aa).

The Cytoplasmic segment spans residues 1–21; it reads MNKQSWLLNLSLLKTHPAFRA. Residues 22-42 traverse the membrane as a helical segment; it reads VFLARFISIVSLGLLGVAVPV. Topologically, residues 43-55 are periplasmic; the sequence is QIQMMTHSTWQVG. The chain crosses the membrane as a helical span at residues 56 to 76; it reads LSVTLTGGAMFVGLMVGGVLA. At 77-83 the chain is on the cytoplasmic side; the sequence is DRYERKK. The helical transmembrane segment at 84–104 threads the bilayer; it reads VILLARGTCGIGFIGLCLNAL. The Periplasmic portion of the chain corresponds to 105 to 109; it reads LPEPS. Residues 110–130 form a helical membrane-spanning segment; it reads LLAIYLLGLWDGFFASLGVTA. At 131 to 156 the chain is on the cytoplasmic side; that stretch reads LLAATPALVGRENLMQAGAITMLTVR. Residues 157 to 177 form a helical membrane-spanning segment; sequence LGSVISPMIGGLLLATGGVAW. Position 178 (N178) is a topological domain, periplasmic. The helical transmembrane segment at 179 to 199 threads the bilayer; sequence YGLAAAGTFITLLPLLSLPAL. Topologically, residues 200–218 are cytoplasmic; that stretch reads PPPPQPREHPLKSLLAGFR. Residues 219–239 traverse the membrane as a helical segment; sequence FLLASPLVGGIALLGGLLTMA. Topologically, residues 240-256 are periplasmic; that stretch reads SAVRVLYPALADNWQMS. A helical membrane pass occupies residues 257–277; that stretch reads AAQIGFLYAAIPLGAAIGALT. The Cytoplasmic segment spans residues 278-287; sequence SGKLAHSARP. Residues 288–307 form a helical membrane-spanning segment; the sequence is GLLMLLSTLGSFLAIGLFGL. Topologically, residues 308–313 are periplasmic; that stretch reads MPMWIL. Residues 314–336 form a helical membrane-spanning segment; that stretch reads GVVCLALFGWLSAVSSLLQYTML. Residues 337–356 lie on the Cytoplasmic side of the membrane; sequence QTQTPEAMLGRINGLWTAQN. The chain crosses the membrane as a helical span at residues 357-377; sequence VTGDAIGAALLGGLGAMMTPV. Residue A378 is a topological domain, periplasmic. Residues 379–399 traverse the membrane as a helical segment; sequence SASASGFGLLIIGVLLLLVLV. Over 400-416 the chain is Cytoplasmic; sequence ELRRFRQTPPQVTASDG.

The protein belongs to the major facilitator superfamily. EntS (TC 2.A.1.38) family.

Its subcellular location is the cell inner membrane. In terms of biological role, component of an export pathway for enterobactin. This Escherichia coli O157:H7 protein is Enterobactin exporter EntS.